The following is a 297-amino-acid chain: Lipoyl synthase (297 aa).

Positions 34, 39, 45, 60, 64, 67, and 273 each coordinate [4Fe-4S] cluster. A Radical SAM core domain is found at 46–262 (WNKRHATVMI…KYVAYSKGFL (217 aa)).

The protein belongs to the radical SAM superfamily. Lipoyl synthase family. [4Fe-4S] cluster serves as cofactor.

Its subcellular location is the cytoplasm. It catalyses the reaction [[Fe-S] cluster scaffold protein carrying a second [4Fe-4S](2+) cluster] + N(6)-octanoyl-L-lysyl-[protein] + 2 oxidized [2Fe-2S]-[ferredoxin] + 2 S-adenosyl-L-methionine + 4 H(+) = [[Fe-S] cluster scaffold protein] + N(6)-[(R)-dihydrolipoyl]-L-lysyl-[protein] + 4 Fe(3+) + 2 hydrogen sulfide + 2 5'-deoxyadenosine + 2 L-methionine + 2 reduced [2Fe-2S]-[ferredoxin]. The protein operates within protein modification; protein lipoylation via endogenous pathway; protein N(6)-(lipoyl)lysine from octanoyl-[acyl-carrier-protein]: step 2/2. Functionally, catalyzes the radical-mediated insertion of two sulfur atoms into the C-6 and C-8 positions of the octanoyl moiety bound to the lipoyl domains of lipoate-dependent enzymes, thereby converting the octanoylated domains into lipoylated derivatives. The sequence is that of Lipoyl synthase from Ehrlichia chaffeensis (strain ATCC CRL-10679 / Arkansas).